A 62-amino-acid polypeptide reads, in one-letter code: Conotoxin Im5.1 (62 aa).

The N-terminal stretch at 1–19 (MYCLPVFIILLLLISSAPS) is a signal peptide. A propeptide spanning residues 20–48 (TPPQPRNKDRVHLISLLDNHKQILQRDWN) is cleaved from the precursor. Trp60 carries the tryptophan amide modification.

It belongs to the conotoxin T superfamily. In terms of processing, contains 2 disulfide bonds that can be either 'C1-C3, C2-C4' or 'C1-C4, C2-C3', since these disulfide connectivities have been observed for conotoxins with cysteine framework V (for examples, see AC P0DQQ7 and AC P81755). Expressed by the venom duct.

Its subcellular location is the secreted. The polypeptide is Conotoxin Im5.1 (Conus imperialis (Imperial cone)).